Consider the following 345-residue polypeptide: CRISPR-associated endonuclease Cas1 1 (345 aa).

3 residues coordinate a divalent metal cation: Glu-168, His-239, and Glu-254.

This sequence belongs to the CRISPR-associated endonuclease Cas1 family. As to quaternary structure, forms a heterotetramer with a Cas2 homodimer. Homodimer. A divalent metal cation serves as cofactor.

Its function is as follows. CRISPR (clustered regularly interspaced short palindromic repeat), is an adaptive immune system that provides protection against mobile genetic elements (viruses, transposable elements and conjugative plasmids). CRISPR clusters contain sequences complementary to antecedent mobile elements and target invading nucleic acids. CRISPR clusters are transcribed and processed into CRISPR RNA (crRNA). Involved in the integration of spacer DNA into the CRISPR cassette. Acts as a dsDNA and ssRNA nuclease, binds to linear and circular dsDNA and linear ssRNA and ssDNA. The sequence is that of CRISPR-associated endonuclease Cas1 1 from Archaeoglobus fulgidus (strain ATCC 49558 / DSM 4304 / JCM 9628 / NBRC 100126 / VC-16).